An 85-amino-acid polypeptide reads, in one-letter code: Neurotoxin 60.35 (85 aa).

Positions 1 to 23 (MKFCVAVSLLIIASMAGVISVSG) are cleaved as a signal peptide. Residues 24–85 (YDVYPRDYAG…NFLSVIWKQC (62 aa)) form the LCN-type CS-alpha/beta domain. Intrachain disulfides connect Cys-38–Cys-60, Cys-46–Cys-65, and Cys-50–Cys-67.

Belongs to the long (3 C-C) scorpion toxin superfamily. In terms of tissue distribution, expressed by the venom gland.

The protein localises to the secreted. The chain is Neurotoxin 60.35 from Lychas mucronatus (Chinese swimming scorpion).